The chain runs to 117 residues: MNKDESRQRRARQTRIRIAEAQANRLTVIRSNTHISAQVYSPCGTKVVAAASTMEKDLRQAIKNGGNAQAAAQIGKLVAERAVKAGVVDVAFDRSGHRYHGRIKALAEAAREAGLKF.

It belongs to the universal ribosomal protein uL18 family. As to quaternary structure, part of the 50S ribosomal subunit; part of the 5S rRNA/L5/L18/L25 subcomplex. Contacts the 5S and 23S rRNAs.

Functionally, this is one of the proteins that bind and probably mediate the attachment of the 5S RNA into the large ribosomal subunit, where it forms part of the central protuberance. The sequence is that of Large ribosomal subunit protein uL18 from Polynucleobacter asymbioticus (strain DSM 18221 / CIP 109841 / QLW-P1DMWA-1) (Polynucleobacter necessarius subsp. asymbioticus).